The chain runs to 85 residues: Small ribosomal subunit protein bS18 (85 aa).

Belongs to the bacterial ribosomal protein bS18 family. Part of the 30S ribosomal subunit. Forms a tight heterodimer with protein bS6.

In terms of biological role, binds as a heterodimer with protein bS6 to the central domain of the 16S rRNA, where it helps stabilize the platform of the 30S subunit. The protein is Small ribosomal subunit protein bS18 of Helicobacter acinonychis (strain Sheeba).